The sequence spans 201 residues: Small ribosomal subunit protein eS1 (201 aa).

The protein belongs to the eukaryotic ribosomal protein eS1 family.

The protein is Small ribosomal subunit protein eS1 of Methanoregula boonei (strain DSM 21154 / JCM 14090 / 6A8).